A 207-amino-acid polypeptide reads, in one-letter code: Small ribosomal subunit protein uS4 (207 aa).

Residues 31–56 (KCKLDSKPGQHGRTSGARTSDYGNQL) form a disordered region. Polar residues predominate over residues 42–53 (GRTSGARTSDYG). One can recognise an S4 RNA-binding domain in the interval 97–157 (TRLDNVVYRM…EKSKKQVRIV (61 aa)).

Belongs to the universal ribosomal protein uS4 family. Part of the 30S ribosomal subunit. Contacts protein S5. The interaction surface between S4 and S5 is involved in control of translational fidelity.

In terms of biological role, one of the primary rRNA binding proteins, it binds directly to 16S rRNA where it nucleates assembly of the body of the 30S subunit. Functionally, with S5 and S12 plays an important role in translational accuracy. In Herminiimonas arsenicoxydans, this protein is Small ribosomal subunit protein uS4.